The sequence spans 137 residues: Protein MGF 110-7L (137 aa).

Positions 1-20 (MLVIILGVIGLLASSNLVSS) are cleaved as a signal peptide. Asn-69, Asn-70, and Asn-105 each carry an N-linked (GlcNAc...) asparagine; by host glycan.

It belongs to the asfivirus MGF 110 family.

In terms of biological role, plays a role in virus cell tropism, and may be required for efficient virus replication in macrophages. The protein is Protein MGF 110-7L of African swine fever virus (isolate Pig/Kenya/KEN-50/1950) (ASFV).